The primary structure comprises 338 residues: Aspartate carbamoyltransferase catalytic subunit (338 aa).

Carbamoyl phosphate contacts are provided by Arg-72 and Thr-73. L-aspartate is bound at residue Lys-100. Carbamoyl phosphate-binding residues include Arg-122, His-152, and Gln-155. L-aspartate contacts are provided by Arg-186 and Arg-243. Carbamoyl phosphate is bound by residues Gly-284 and Pro-285.

It belongs to the aspartate/ornithine carbamoyltransferase superfamily. ATCase family. In terms of assembly, heterododecamer (2C3:3R2) of six catalytic PyrB chains organized as two trimers (C3), and six regulatory PyrI chains organized as three dimers (R2).

The catalysed reaction is carbamoyl phosphate + L-aspartate = N-carbamoyl-L-aspartate + phosphate + H(+). The protein operates within pyrimidine metabolism; UMP biosynthesis via de novo pathway; (S)-dihydroorotate from bicarbonate: step 2/3. Functionally, catalyzes the condensation of carbamoyl phosphate and aspartate to form carbamoyl aspartate and inorganic phosphate, the committed step in the de novo pyrimidine nucleotide biosynthesis pathway. The sequence is that of Aspartate carbamoyltransferase catalytic subunit from Acinetobacter baylyi (strain ATCC 33305 / BD413 / ADP1).